Reading from the N-terminus, the 384-residue chain is MDLVDKRDVLIGDFRPSLGFYGGVRVGVYLDTTEPKHAKIKGFAMETLKRSSKVWLQELRSNLNIFWGTIESEISKNGAASYIFPLQRCIFSFLCASLAGVDASVSPDIAENGWKTINTWLALQVIPTAKLGVVPQPLEEILLHTWPYPSLLIAGNYKKLYNFIDENAGDCLRLGQEEFGLTRDEAIQNLLFVLGFNAYGGFSVFLPSLIGRITGDNSGLQERIRTEVRRVCGSGSDLNFKTVNEMELVKSVVYETLRFSPPVPLQFARARKDFQISSHDAVFEVKKGELLCGYQPLVMRDANVFDEPEEFKPDRYVGETGSELLNYLYWSNGPQTGTPSASNKQCAAKDIVTLTASLLVADLFLRYDTITGDSGSIKAVVKAK.

C346 serves as a coordination point for heme.

The protein belongs to the cytochrome P450 family. It depends on heme as a cofactor. In terms of tissue distribution, expressed in roots, leaves, flowers and siliques.

The chain is Probable inactive linolenate hydroperoxide lyase from Arabidopsis thaliana (Mouse-ear cress).